We begin with the raw amino-acid sequence, 88 residues long: Small ribosomal subunit protein bS16c (88 aa).

It belongs to the bacterial ribosomal protein bS16 family.

It localises to the plastid. Its subcellular location is the chloroplast. This chain is Small ribosomal subunit protein bS16c, found in Helianthus annuus (Common sunflower).